A 449-amino-acid chain; its full sequence is MFS-type transporter 1 (449 aa).

Residues 1–37 (MTHSSSNEHEKEDDRRASDDMMDRDDQNAKEEQDVSK) are compositionally biased toward basic and acidic residues. A disordered region spans residues 1-43 (MTHSSSNEHEKEDDRRASDDMMDRDDQNAKEEQDVSKDAPPVN). 6 helical membrane-spanning segments follow: residues 61 to 81 (VAGGFCSLFCSFGWINCIGIF), 97 to 117 (TISWIASLELFILFAGGLVVG), 127 to 147 (YILLFGTFMHVFGLMMASLST), 152 to 172 (ILLSQGICSPIGISCLFTPAV), 185 to 205 (LANGIVAAGSSLGGVIFPIMF), and 212 to 232 (VGFPWAMRIGAFLILFLLIIA). Asparagine 233 carries N-linked (GlcNAc...) asparagine glycosylation. 6 helical membrane-spanning segments follow: residues 262–282 (LLTTIAAMIFVLGLFLPINYI), 298–318 (YLIPILNAASLFGRTVPGFVA), 326–346 (VHTFMCFFSSVVAFALWLPAA), 349–369 (APIIVFAALYGFGSGAFVAIL), 390–410 (FGVLSLPALVSNPIGGAFVAH), and 420–440 (IWTGCITMLGAILFVVARISL).

It belongs to the major facilitator superfamily. Monocarboxylate porter (TC 2.A.1.13) family.

The protein resides in the cell membrane. The catalysed reaction is erythrostominone(in) = erythrostominone(out). It carries out the reaction deoxyerythrostominone(in) = deoxyerythrostominone(out). It catalyses the reaction epierythrostominol(in) = epierythrostominol(out). The enzyme catalyses deoxyerythrostominol(in) = deoxyerythrostominol(out). Functionally, MFS-type transporter that mediates the secretion of the 4 major naphthoquinone derivatives produced, erythrostominone (NQ1), deoxyerythrostominone (NQ2), epierythrostominol (NQ4), and deoxyerythrostominol (NQ5), as well as of 3 newly identified naphthoquinone derivatives termed NQ7, NQ8 and NQ9. This chain is MFS-type transporter 1, found in Ophiocordyceps sp. (strain BCC 1869) (Entomopathogenic fungus).